Here is a 257-residue protein sequence, read N- to C-terminus: Beta-fibrinogenase mucrofibrase-5 (257 aa).

Positions 1–18 (MVLIRVLANLLILQLSYA) are cleaved as a signal peptide. The propeptide occupies 19–24 (QKSSEL). The Peptidase S1 domain occupies 25–248 (IIGGDECNIN…HLDWIKGIIA (224 aa)). Disulfide bonds link Cys31–Cys162, Cys49–Cys65, Cys97–Cys255, Cys141–Cys209, Cys173–Cys188, and Cys199–Cys224. His64 functions as the Charge relay system in the catalytic mechanism. A glycan (N-linked (GlcNAc...) asparagine) is linked at Asn102. Catalysis depends on Asp109, which acts as the Charge relay system. Ser203 (charge relay system) is an active-site residue.

It belongs to the peptidase S1 family. Snake venom subfamily. As to quaternary structure, monomer. As to expression, expressed by the venom gland.

The protein localises to the secreted. Snake venom serine protease with strong beta-fibrinogenolytic activities, angiotensin I (AGT)-degrading activities and strong kallikrein-like activities in vitro, releasing bradykinin from kininogen (KNG1). Intravenous injection mildly lowers blood pressure in experimental rats, which may be explained by the action on angiotensin I and kininogen. Exhibits amidase activity against N-benzoyl-Pro-Phe-Arg-p-nitroanilide in vitro. This Protobothrops mucrosquamatus (Taiwan habu) protein is Beta-fibrinogenase mucrofibrase-5.